We begin with the raw amino-acid sequence, 389 residues long: tRNA-specific 2-thiouridylase MnmA (389 aa).

Residues 21 to 28 (AMSGGVDS) and L47 contribute to the ATP site. The active-site Nucleophile is C115. The cysteines at positions 115 and 212 are disulfide-linked. Position 139 (G139) interacts with ATP. The segment at 162 to 164 (RDQ) is interaction with tRNA. The active-site Cysteine persulfide intermediate is C212.

This sequence belongs to the MnmA/TRMU family.

It is found in the cytoplasm. The catalysed reaction is S-sulfanyl-L-cysteinyl-[protein] + uridine(34) in tRNA + AH2 + ATP = 2-thiouridine(34) in tRNA + L-cysteinyl-[protein] + A + AMP + diphosphate + H(+). In terms of biological role, catalyzes the 2-thiolation of uridine at the wobble position (U34) of tRNA, leading to the formation of s(2)U34. The chain is tRNA-specific 2-thiouridylase MnmA from Xanthobacter autotrophicus (strain ATCC BAA-1158 / Py2).